We begin with the raw amino-acid sequence, 627 residues long: Chaperone protein HtpG (627 aa).

Positions 1–339 are a; substrate-binding; that stretch reads MKGQETRGFQ…SNDLPLNVSR (339 aa). The segment at 340–555 is b; sequence EILQDSRVTQ…ADEMSTQMAK (216 aa). The tract at residues 556 to 627 is c; the sequence is LFAAAGQQAP…IRRMNQLLSA (72 aa).

This sequence belongs to the heat shock protein 90 family. Homodimer.

The protein localises to the cytoplasm. Molecular chaperone. Has ATPase activity. This Pectobacterium atrosepticum (strain SCRI 1043 / ATCC BAA-672) (Erwinia carotovora subsp. atroseptica) protein is Chaperone protein HtpG.